Here is a 188-residue protein sequence, read N- to C-terminus: Peptidyl-tRNA hydrolase (188 aa).

Phenylalanine 14 is a tRNA binding site. Histidine 19 serves as the catalytic Proton acceptor. The tRNA site is built by tyrosine 64, asparagine 66, and asparagine 112.

This sequence belongs to the PTH family. As to quaternary structure, monomer.

The protein resides in the cytoplasm. The catalysed reaction is an N-acyl-L-alpha-aminoacyl-tRNA + H2O = an N-acyl-L-amino acid + a tRNA + H(+). In terms of biological role, hydrolyzes ribosome-free peptidyl-tRNAs (with 1 or more amino acids incorporated), which drop off the ribosome during protein synthesis, or as a result of ribosome stalling. Functionally, catalyzes the release of premature peptidyl moieties from peptidyl-tRNA molecules trapped in stalled 50S ribosomal subunits, and thus maintains levels of free tRNAs and 50S ribosomes. The protein is Peptidyl-tRNA hydrolase of Aster yellows witches'-broom phytoplasma (strain AYWB).